Reading from the N-terminus, the 175-residue chain is Transcription factor E (175 aa).

The 86-residue stretch at 3–88 (DNPLIQQVLF…TWKPSLEKLP (86 aa)) folds into the HTH TFE/IIEalpha-type domain.

It belongs to the TFE family. Monomer. Interaction with RNA polymerase subunits RpoF and RpoE is necessary for Tfe stimulatory transcription activity. Able to interact with Tbp and RNA polymerase in the absence of DNA promoter. Interacts both with the preinitiation and elongation complexes.

In terms of biological role, transcription factor that plays a role in the activation of archaeal genes transcribed by RNA polymerase. Facilitates transcription initiation by enhancing TATA-box recognition by TATA-box-binding protein (Tbp), and transcription factor B (Tfb) and RNA polymerase recruitment. Not absolutely required for transcription in vitro, but particularly important in cases where Tbp or Tfb function is not optimal. It dynamically alters the nucleic acid-binding properties of RNA polymerases by stabilizing the initiation complex and destabilizing elongation complexes. Seems to translocate with the RNA polymerase following initiation and acts by binding to the non template strand of the transcription bubble in elongation complexes. The protein is Transcription factor E of Methanococcus vannielii (strain ATCC 35089 / DSM 1224 / JCM 13029 / OCM 148 / SB).